Consider the following 191-residue polypeptide: dTTP/UTP pyrophosphatase (191 aa).

D70 acts as the Proton acceptor in catalysis.

The protein belongs to the Maf family. YhdE subfamily. Requires a divalent metal cation as cofactor.

Its subcellular location is the cytoplasm. It catalyses the reaction dTTP + H2O = dTMP + diphosphate + H(+). The catalysed reaction is UTP + H2O = UMP + diphosphate + H(+). In terms of biological role, nucleoside triphosphate pyrophosphatase that hydrolyzes dTTP and UTP. May have a dual role in cell division arrest and in preventing the incorporation of modified nucleotides into cellular nucleic acids. The polypeptide is dTTP/UTP pyrophosphatase (Clostridium novyi (strain NT)).